The chain runs to 25 residues: Small ribosomal subunit protein eS32 eS32z/eS32y/eS32x/eS32w/eS32v (25 aa).

Positions 1–25 (MRAKWKKKRMRRLKRKRRKMRQRSK) are disordered.

This sequence belongs to the eukaryotic ribosomal protein eS32 family. Component of the small ribosomal subunit (SSU).

In Arabidopsis thaliana (Mouse-ear cress), this protein is Small ribosomal subunit protein eS32 eS32z/eS32y/eS32x/eS32w/eS32v (RPL41A).